The primary structure comprises 243 residues: Biosynthetic peptidoglycan transglycosylase (243 aa).

A helical transmembrane segment spans residues 22 to 42; that stretch reads LIVLLVLALMSVLQVIVFRFV.

The protein belongs to the glycosyltransferase 51 family.

The protein resides in the cell inner membrane. The catalysed reaction is [GlcNAc-(1-&gt;4)-Mur2Ac(oyl-L-Ala-gamma-D-Glu-L-Lys-D-Ala-D-Ala)](n)-di-trans,octa-cis-undecaprenyl diphosphate + beta-D-GlcNAc-(1-&gt;4)-Mur2Ac(oyl-L-Ala-gamma-D-Glu-L-Lys-D-Ala-D-Ala)-di-trans,octa-cis-undecaprenyl diphosphate = [GlcNAc-(1-&gt;4)-Mur2Ac(oyl-L-Ala-gamma-D-Glu-L-Lys-D-Ala-D-Ala)](n+1)-di-trans,octa-cis-undecaprenyl diphosphate + di-trans,octa-cis-undecaprenyl diphosphate + H(+). The protein operates within cell wall biogenesis; peptidoglycan biosynthesis. Peptidoglycan polymerase that catalyzes glycan chain elongation from lipid-linked precursors. The chain is Biosynthetic peptidoglycan transglycosylase from Xylella fastidiosa (strain 9a5c).